Consider the following 102-residue polypeptide: Small ribosomal subunit protein uS10 (102 aa).

This sequence belongs to the universal ribosomal protein uS10 family. As to quaternary structure, part of the 30S ribosomal subunit.

Involved in the binding of tRNA to the ribosomes. The protein is Small ribosomal subunit protein uS10 of Carboxydothermus hydrogenoformans (strain ATCC BAA-161 / DSM 6008 / Z-2901).